We begin with the raw amino-acid sequence, 333 residues long: Glycerol-3-phosphate dehydrogenase [NAD(P)+] (333 aa).

Residues S10, W11, H31, R32, and K105 each coordinate NADPH. 3 residues coordinate sn-glycerol 3-phosphate: K105, G136, and S138. A140 contributes to the NADPH binding site. Sn-glycerol 3-phosphate contacts are provided by K191, D244, S254, R255, and N256. K191 serves as the catalytic Proton acceptor. Position 255 (R255) interacts with NADPH. NADPH-binding residues include I279 and E281.

This sequence belongs to the NAD-dependent glycerol-3-phosphate dehydrogenase family.

It localises to the cytoplasm. It catalyses the reaction sn-glycerol 3-phosphate + NAD(+) = dihydroxyacetone phosphate + NADH + H(+). The catalysed reaction is sn-glycerol 3-phosphate + NADP(+) = dihydroxyacetone phosphate + NADPH + H(+). Its pathway is membrane lipid metabolism; glycerophospholipid metabolism. In terms of biological role, catalyzes the reduction of the glycolytic intermediate dihydroxyacetone phosphate (DHAP) to sn-glycerol 3-phosphate (G3P), the key precursor for phospholipid synthesis. The polypeptide is Glycerol-3-phosphate dehydrogenase [NAD(P)+] (Pelodictyon phaeoclathratiforme (strain DSM 5477 / BU-1)).